Reading from the N-terminus, the 98-residue chain is NADH-ubiquinone oxidoreductase chain 4L (98 aa).

Transmembrane regions (helical) follow at residues methionine 1–phenylalanine 21, leucine 26–leucine 46, and alanine 59–valine 79.

Belongs to the complex I subunit 4L family. Core subunit of respiratory chain NADH dehydrogenase (Complex I) which is composed of 45 different subunits.

It localises to the mitochondrion inner membrane. It carries out the reaction a ubiquinone + NADH + 5 H(+)(in) = a ubiquinol + NAD(+) + 4 H(+)(out). Functionally, core subunit of the mitochondrial membrane respiratory chain NADH dehydrogenase (Complex I) which catalyzes electron transfer from NADH through the respiratory chain, using ubiquinone as an electron acceptor. Part of the enzyme membrane arm which is embedded in the lipid bilayer and involved in proton translocation. This is NADH-ubiquinone oxidoreductase chain 4L (mt-nd4l) from Danio rerio (Zebrafish).